The chain runs to 462 residues: tRNA modification GTPase MnmE (462 aa).

(6S)-5-formyl-5,6,7,8-tetrahydrofolate is bound by residues R34, E92, and K131. The region spanning 227-386 (GLQVVIAGKP…LIDAITAHAG (160 aa)) is the TrmE-type G domain. N237 serves as a coordination point for K(+). GTP-binding positions include 237–242 (NAGKSS), 256–262 (TDIAGTT), and 281–284 (DTAG). A Mg(2+)-binding site is contributed by S241. K(+) is bound by residues T256, I258, and T261. Position 262 (T262) interacts with Mg(2+). K462 serves as a coordination point for (6S)-5-formyl-5,6,7,8-tetrahydrofolate.

The protein belongs to the TRAFAC class TrmE-Era-EngA-EngB-Septin-like GTPase superfamily. TrmE GTPase family. Homodimer. Heterotetramer of two MnmE and two MnmG subunits. Requires K(+) as cofactor.

Its subcellular location is the cytoplasm. Exhibits a very high intrinsic GTPase hydrolysis rate. Involved in the addition of a carboxymethylaminomethyl (cmnm) group at the wobble position (U34) of certain tRNAs, forming tRNA-cmnm(5)s(2)U34. This Acinetobacter baylyi (strain ATCC 33305 / BD413 / ADP1) protein is tRNA modification GTPase MnmE.